A 517-amino-acid polypeptide reads, in one-letter code: UDP-N-acetylmuramoyl-L-alanyl-D-glutamate--2,6-diaminopimelate ligase (517 aa).

Residues leucine 34 and serine 36 each contribute to the UDP-N-acetyl-alpha-D-muramoyl-L-alanyl-D-glutamate site. Residue 122–128 (GTSGKTT) coordinates ATP. Residues 164–165 (TT), serine 191, and arginine 199 each bind UDP-N-acetyl-alpha-D-muramoyl-L-alanyl-D-glutamate. An N6-carboxylysine modification is found at lysine 231. Residues arginine 394, 418–421 (DNPR), glycine 476, and glutamate 480 each bind meso-2,6-diaminopimelate. The Meso-diaminopimelate recognition motif signature appears at 418–421 (DNPR).

The protein belongs to the MurCDEF family. MurE subfamily. Requires Mg(2+) as cofactor. In terms of processing, carboxylation is probably crucial for Mg(2+) binding and, consequently, for the gamma-phosphate positioning of ATP.

The protein localises to the cytoplasm. It carries out the reaction UDP-N-acetyl-alpha-D-muramoyl-L-alanyl-D-glutamate + meso-2,6-diaminopimelate + ATP = UDP-N-acetyl-alpha-D-muramoyl-L-alanyl-gamma-D-glutamyl-meso-2,6-diaminopimelate + ADP + phosphate + H(+). The protein operates within cell wall biogenesis; peptidoglycan biosynthesis. Catalyzes the addition of meso-diaminopimelic acid to the nucleotide precursor UDP-N-acetylmuramoyl-L-alanyl-D-glutamate (UMAG) in the biosynthesis of bacterial cell-wall peptidoglycan. The chain is UDP-N-acetylmuramoyl-L-alanyl-D-glutamate--2,6-diaminopimelate ligase from Corynebacterium glutamicum (strain ATCC 13032 / DSM 20300 / JCM 1318 / BCRC 11384 / CCUG 27702 / LMG 3730 / NBRC 12168 / NCIMB 10025 / NRRL B-2784 / 534).